The chain runs to 256 residues: tRNA (guanine-N(7)-)-methyltransferase (256 aa).

The span at 1–15 shows a compositional bias: polar residues; it reads MVATGGQAQDQSHNQ. A disordered region spans residues 1-22; it reads MVATGGQAQDQSHNQEPGVLCP. Residues Gly-79, 102-103, 137-138, and Leu-157 contribute to the S-adenosyl-L-methionine site; these read EI and NA. The active site involves Asp-160. 235–237 contacts S-adenosyl-L-methionine; sequence SEE.

This sequence belongs to the class I-like SAM-binding methyltransferase superfamily. TrmB family.

It is found in the nucleus. The catalysed reaction is guanosine(46) in tRNA + S-adenosyl-L-methionine = N(7)-methylguanosine(46) in tRNA + S-adenosyl-L-homocysteine. It functions in the pathway tRNA modification; N(7)-methylguanine-tRNA biosynthesis. Its function is as follows. Catalyzes the formation of N(7)-methylguanine at position 46 (m7G46) in tRNA. This is tRNA (guanine-N(7)-)-methyltransferase from Drosophila yakuba (Fruit fly).